A 349-amino-acid polypeptide reads, in one-letter code: Insulin gene enhancer protein ISL-1 (349 aa).

2 LIM zinc-binding domains span residues 17–70 (CVGC…CKRD) and 79–133 (CAKC…RADH). The homeobox DNA-binding region spans 181-240 (TTRVRTVLNEKQLHTLRTCYAANPRPDALMKEQLVEMTGLSPRVIRVWFQNKRCKDKKRS). The segment at 312-349 (VNFSEGGPGSNSTGSEVASMSSQLPDTPNSMVASPIEA) is disordered. A compositionally biased stretch (polar residues) spans 321–343 (SNSTGSEVASMSSQLPDTPNSMV).

Its subcellular location is the nucleus. Functionally, acts as a transcriptional regulator. Recognizes and binds to the consensus octamer binding site 5'-ATAATTAA-3' in promoter of target genes. Plays a fundamental role in the gene regulatory network essential for retinal ganglion cell (RGC) differentiation. Binds to insulin gene enhancer sequences. Defines subclasses of motoneurons that segregate into columns in the spinal cord and select distinct axon pathways. Acts in conjunction with LHX1, LHX3 and ISL2. Binds to insulin gene enhancer sequences. Essential for heart development. This chain is Insulin gene enhancer protein ISL-1 (ISL1), found in Gallus gallus (Chicken).